Reading from the N-terminus, the 97-residue chain is Co-chaperonin GroES (97 aa).

Belongs to the GroES chaperonin family. In terms of assembly, heptamer of 7 subunits arranged in a ring. Interacts with the chaperonin GroEL.

It is found in the cytoplasm. Its function is as follows. Together with the chaperonin GroEL, plays an essential role in assisting protein folding. The GroEL-GroES system forms a nano-cage that allows encapsulation of the non-native substrate proteins and provides a physical environment optimized to promote and accelerate protein folding. GroES binds to the apical surface of the GroEL ring, thereby capping the opening of the GroEL channel. This Pseudomonas fluorescens (strain ATCC BAA-477 / NRRL B-23932 / Pf-5) protein is Co-chaperonin GroES.